A 265-amino-acid polypeptide reads, in one-letter code: ATP synthase subunit a (265 aa).

The next 6 helical transmembrane spans lie at 26 to 46 (VHLD…FFFY), 88 to 108 (IGSL…IDLI), 132 to 152 (DISA…FYTI), 168 to 188 (PFNH…TLLA), 195 to 217 (FRLF…MYMA), and 231 to 251 (LIWA…FMML).

Belongs to the ATPase A chain family. F-type ATPases have 2 components, CF(1) - the catalytic core - and CF(0) - the membrane proton channel. CF(1) has five subunits: alpha(3), beta(3), gamma(1), delta(1), epsilon(1). CF(0) has three main subunits: a(1), b(2) and c(9-12). The alpha and beta chains form an alternating ring which encloses part of the gamma chain. CF(1) is attached to CF(0) by a central stalk formed by the gamma and epsilon chains, while a peripheral stalk is formed by the delta and b chains.

It is found in the cell inner membrane. Functionally, key component of the proton channel; it plays a direct role in the translocation of protons across the membrane. This chain is ATP synthase subunit a, found in Histophilus somni (strain 129Pt) (Haemophilus somnus).